Here is a 151-residue protein sequence, read N- to C-terminus: Regulatory protein RecX (151 aa).

The protein belongs to the RecX family.

Its subcellular location is the cytoplasm. Its function is as follows. Modulates RecA activity. This Herminiimonas arsenicoxydans protein is Regulatory protein RecX.